We begin with the raw amino-acid sequence, 853 residues long: Protein translocase subunit SecA (853 aa).

ATP contacts are provided by residues glutamine 77, 95–99, and aspartate 532; that span reads GEGKT.

The protein belongs to the SecA family. As to quaternary structure, monomer and homodimer. Part of the essential Sec protein translocation apparatus which comprises SecA, SecYEG and auxiliary proteins SecDF. Other proteins may also be involved.

It localises to the cell inner membrane. It is found in the cytoplasm. The catalysed reaction is ATP + H2O + cellular proteinSide 1 = ADP + phosphate + cellular proteinSide 2.. Its function is as follows. Part of the Sec protein translocase complex. Interacts with the SecYEG preprotein conducting channel. Has a central role in coupling the hydrolysis of ATP to the transfer of proteins into and across the cell membrane, serving as an ATP-driven molecular motor driving the stepwise translocation of polypeptide chains across the membrane. The chain is Protein translocase subunit SecA from Thermosipho melanesiensis (strain DSM 12029 / CIP 104789 / BI429).